Reading from the N-terminus, the 143-residue chain is Ribosome maturation factor RimP (143 aa).

This sequence belongs to the RimP family.

It localises to the cytoplasm. In terms of biological role, required for maturation of 30S ribosomal subunits. This Borrelia turicatae (strain 91E135) protein is Ribosome maturation factor RimP.